The primary structure comprises 364 residues: Histidinol-phosphate aminotransferase BQ2027_MB2256C (364 aa).

Residue K220 is modified to N6-(pyridoxal phosphate)lysine.

It belongs to the class-I pyridoxal-phosphate-dependent aminotransferase family. In terms of assembly, monomer. Pyridoxal 5'-phosphate is required as a cofactor.

Its subcellular location is the secreted. The protein resides in the cell wall. It carries out the reaction L-histidinol phosphate + 2-oxoglutarate = 3-(imidazol-4-yl)-2-oxopropyl phosphate + L-glutamate. Functionally, aminotransferase that catalyzes the conversion of histidinol phosphate and 2-oxoglutarate into L-glutamate and imidazole acetol phosphate. Might play a significant role in mediating histidine biosynthesis during infection. Facilitates mycobacterial survival and virulence in macrophages. This is Histidinol-phosphate aminotransferase BQ2027_MB2256C from Mycobacterium bovis (strain ATCC BAA-935 / AF2122/97).